A 394-amino-acid chain; its full sequence is Actin-related protein 2 (394 aa).

Residues 160–162, 214–218, and 305–310 contribute to the ATP site; these read GDG, RMIKE, and GGSTMY.

This sequence belongs to the actin family. ARP2 subfamily. In terms of assembly, component of the Arp2/3 complex composed of ACTR2/ARP2, ACTR3/ARP3, ARPC1B/p41-ARC, ARPC2/p34-ARC, ARPC3/p21-ARC, ARPC4/p20-ARC and ARPC5/p16-ARC.

Its subcellular location is the cytoplasm. The protein localises to the cytoskeleton. It localises to the cell projection. The protein resides in the nucleus. ATP-binding component of the Arp2/3 complex, a multiprotein complex that mediates actin polymerization upon stimulation by nucleation-promoting factor (NPF). The Arp2/3 complex mediates the formation of branched actin networks in the cytoplasm, providing the force for cell motility. Seems to contact the pointed end of the daughter actin filament. In addition to its role in the cytoplasmic cytoskeleton, the Arp2/3 complex also promotes actin polymerization in the nucleus, thereby regulating gene transcription and repair of damaged DNA. The Arp2/3 complex promotes homologous recombination (HR) repair in response to DNA damage by promoting nuclear actin polymerization, leading to drive motility of double-strand breaks (DSBs). This Gallus gallus (Chicken) protein is Actin-related protein 2 (ACTR2).